The primary structure comprises 262 residues: Hydroxyethylthiazole kinase (262 aa).

Met43 lines the substrate pocket. Positions 118 and 164 each coordinate ATP. Ala191 provides a ligand contact to substrate.

It belongs to the Thz kinase family. The cofactor is Mg(2+).

The catalysed reaction is 5-(2-hydroxyethyl)-4-methylthiazole + ATP = 4-methyl-5-(2-phosphooxyethyl)-thiazole + ADP + H(+). The protein operates within cofactor biosynthesis; thiamine diphosphate biosynthesis; 4-methyl-5-(2-phosphoethyl)-thiazole from 5-(2-hydroxyethyl)-4-methylthiazole: step 1/1. Functionally, catalyzes the phosphorylation of the hydroxyl group of 4-methyl-5-beta-hydroxyethylthiazole (THZ). This chain is Hydroxyethylthiazole kinase, found in Cereibacter sphaeroides (strain ATCC 17023 / DSM 158 / JCM 6121 / CCUG 31486 / LMG 2827 / NBRC 12203 / NCIMB 8253 / ATH 2.4.1.) (Rhodobacter sphaeroides).